The following is a 485-amino-acid chain: Taxane 13-alpha-hydroxylase (485 aa).

A heme-binding site is contributed by Cys-431.

Belongs to the cytochrome P450 family. Requires heme as cofactor.

The catalysed reaction is taxa-4(20),11-dien-5alpha-ol + reduced [NADPH--hemoprotein reductase] + O2 = taxa-4(20),11-dien-5alpha,13alpha-diol + oxidized [NADPH--hemoprotein reductase] + H2O + H(+). The protein operates within alkaloid biosynthesis; taxol biosynthesis. Its function is as follows. Involved in the transformation of a taxadienyl acetate by hydroxylation at C13 to yield taxadien-5-alpha-acetoxy-13-alpha-ol. The chain is Taxane 13-alpha-hydroxylase (CYP725A2) from Taxus cuspidata (Japanese yew).